Here is a 72-residue protein sequence, read N- to C-terminus: Omega-conotoxin-like S6.6 (72 aa).

A signal peptide spans 1-22 (MKLTCVVIVAVLLLTACQLLTA). A propeptide spanning residues 23–45 (DDSRGTQKHRALRSDTKLSMSTR) is cleaved from the precursor. Disulfide bonds link C46/C61, C53/C65, and C60/C71. C71 is subject to Cysteine amide.

This sequence belongs to the conotoxin O1 superfamily. As to expression, expressed by the venom duct.

It is found in the secreted. Its function is as follows. Omega-conotoxins act at presynaptic membranes, they bind and block voltage-gated calcium channels (Cav). This toxin blocks N-, P- and Q-type calcium channels. In Conus striatus (Striated cone), this protein is Omega-conotoxin-like S6.6.